Reading from the N-terminus, the 60-residue chain is Small ribosomal subunit protein eS31 (60 aa).

Cysteine 32, cysteine 35, cysteine 50, and cysteine 53 together coordinate Zn(2+). The C4-type zinc finger occupies 32–53 (CPRCGAGVFMGEHKDRFSCGKC).

This sequence belongs to the eukaryotic ribosomal protein eS31 family. In terms of assembly, part of the 30S ribosomal subunit. Zn(2+) serves as cofactor.

This Methanocorpusculum labreanum (strain ATCC 43576 / DSM 4855 / Z) protein is Small ribosomal subunit protein eS31.